The sequence spans 145 residues: Bacilliredoxin SSP1241 (145 aa).

Belongs to the bacilliredoxin family.

The sequence is that of Bacilliredoxin SSP1241 from Staphylococcus saprophyticus subsp. saprophyticus (strain ATCC 15305 / DSM 20229 / NCIMB 8711 / NCTC 7292 / S-41).